We begin with the raw amino-acid sequence, 2167 residues long: Beige protein homolog 1 (2167 aa).

Residues 1368–1499 (KDNDSIATIW…VRDDVLRVLN (132 aa)) enclose the BEACH-type PH domain. Residues 1545–1839 (SANNSLIDGF…QIFQEPHPEK (295 aa)) enclose the BEACH domain. K1667 is covalently cross-linked (Glycyl lysine isopeptide (Lys-Gly) (interchain with G-Cter in ubiquitin)). 5 WD repeats span residues 1927 to 1965 (THMAQITSFAYWKLGEFITGDKNGLIKVWKYRKDKHSVS), 1976 to 2015 (GHLCELKEMRCYHDYNTLLTLDISGLVYVWDMINFELVRQ), 2017 to 2054 (TNDAQKVAISQHAGSIMVLTKNNAISIFNLNGQIYTSK), 2072 to 2111 (KLDAGYRKHIYWKEMEILLVGFEDGTIEIYELFLNFHNEW), and 2129 to 2167 (SIKGQGKTYLSQKRRKDTAEPHEIEVIAGTLDGRLAIWY).

The protein localises to the cytoplasm. It is found in the membrane. May be involved in protein sorting and cell wall formation. The sequence is that of Beige protein homolog 1 (BPH1) from Saccharomyces cerevisiae (strain ATCC 204508 / S288c) (Baker's yeast).